Here is a 634-residue protein sequence, read N- to C-terminus: uncharacterized protein (634 aa).

An N-terminal signal peptide occupies residues 1 to 40; that stretch reads MWLQQRLKGLPGLLSSSWARRLLCLLGLLVLLLWFASSGA. Over 41-589 the chain is Extracellular; the sequence is RRAAGGLHLP…DEHMAQQDPG (549 aa). An N-linked (GlcNAc...) asparagine glycan is attached at N363. Residues 590–610 traverse the membrane as a helical segment; it reads LPFLFWFSVASLITLFHLFLF. Residues 611–634 are Cytoplasmic-facing; sequence KLIYNEYCGPGAKPLFRSKEDPSV.

It localises to the membrane. This is an uncharacterized protein from Mus musculus (Mouse).